Reading from the N-terminus, the 210-residue chain is Probable nicotinate-nucleotide adenylyltransferase (210 aa).

This sequence belongs to the NadD family.

It catalyses the reaction nicotinate beta-D-ribonucleotide + ATP + H(+) = deamido-NAD(+) + diphosphate. The protein operates within cofactor biosynthesis; NAD(+) biosynthesis; deamido-NAD(+) from nicotinate D-ribonucleotide: step 1/1. Catalyzes the reversible adenylation of nicotinate mononucleotide (NaMN) to nicotinic acid adenine dinucleotide (NaAD). The protein is Probable nicotinate-nucleotide adenylyltransferase of Vesicomyosocius okutanii subsp. Calyptogena okutanii (strain HA).